The sequence spans 264 residues: S-adenosylmethionine decarboxylase proenzyme (264 aa).

The active-site Schiff-base intermediate with substrate; via pyruvic acid is the serine 113. Position 113 is a pyruvic acid (Ser); by autocatalysis (serine 113). The active-site Proton acceptor; for processing activity is histidine 118. The Proton donor; for catalytic activity role is filled by cysteine 141.

This sequence belongs to the prokaryotic AdoMetDC family. Type 2 subfamily. Heterooctamer of four alpha and four beta chains arranged as a tetramer of alpha/beta heterodimers. Pyruvate is required as a cofactor. In terms of processing, is synthesized initially as an inactive proenzyme. Formation of the active enzyme involves a self-maturation process in which the active site pyruvoyl group is generated from an internal serine residue via an autocatalytic post-translational modification. Two non-identical subunits are generated from the proenzyme in this reaction, and the pyruvate is formed at the N-terminus of the alpha chain, which is derived from the carboxyl end of the proenzyme. The post-translation cleavage follows an unusual pathway, termed non-hydrolytic serinolysis, in which the side chain hydroxyl group of the serine supplies its oxygen atom to form the C-terminus of the beta chain, while the remainder of the serine residue undergoes an oxidative deamination to produce ammonia and the pyruvoyl group blocking the N-terminus of the alpha chain.

The enzyme catalyses S-adenosyl-L-methionine + H(+) = S-adenosyl 3-(methylsulfanyl)propylamine + CO2. Its pathway is amine and polyamine biosynthesis; S-adenosylmethioninamine biosynthesis; S-adenosylmethioninamine from S-adenosyl-L-methionine: step 1/1. Functionally, catalyzes the decarboxylation of S-adenosylmethionine to S-adenosylmethioninamine (dcAdoMet), the propylamine donor required for the synthesis of the polyamines spermine and spermidine from the diamine putrescine. This Pseudomonas syringae pv. tomato (strain ATCC BAA-871 / DC3000) protein is S-adenosylmethionine decarboxylase proenzyme.